A 124-amino-acid polypeptide reads, in one-letter code: MAKYLTQIIVMGVQVVGRDFAKALRQEFAASQAAADARGHAGHQSAAASNLSGLSLQEAQQILNISKLSPEEVQNYEHLFKVNDKSVGDSFYLQSKVVRAKERLDEELQIQAQEDREKGQMPKT.

Residues 58 to 109 (EAQQILNISKLSPEEVQNYEHLFKVNDKSVGDSFYLQSKVVRAKERLDEELQ) are J-like. Serine 69 carries the post-translational modification Phosphoserine.

This sequence belongs to the TIM16/PAM16 family. In terms of assembly, probable component of the PAM complex at least composed of a mitochondrial HSP70 protein, GRPEL1 or GRPEL2, TIMM44, TIMM16/PAM16 and TIMM14/DNAJC19. Interacts with DNAJC19. Directly interacts with DNAJC15; this interaction counteracts DNAJC15-dependent stimulation of HSPA9 ATPase activity. Associates with the TIM23 complex.

It is found in the mitochondrion inner membrane. In terms of biological role, regulates ATP-dependent protein translocation into the mitochondrial matrix. Inhibits DNAJC19 stimulation of HSPA9/Mortalin ATPase activity. The sequence is that of Mitochondrial import inner membrane translocase subunit TIM16 (Magmas-ps1) from Rattus norvegicus (Rat).